Here is a 138-residue protein sequence, read N- to C-terminus: Large ribosomal subunit protein bL19 (138 aa).

Belongs to the bacterial ribosomal protein bL19 family.

This protein is located at the 30S-50S ribosomal subunit interface and may play a role in the structure and function of the aminoacyl-tRNA binding site. The sequence is that of Large ribosomal subunit protein bL19 from Rickettsia typhi (strain ATCC VR-144 / Wilmington).